A 485-amino-acid chain; its full sequence is N-succinylglutamate 5-semialdehyde dehydrogenase (485 aa).

220 to 225 provides a ligand contact to NAD(+); that stretch reads GSANTG. Catalysis depends on residues Glu243 and Cys278.

The protein belongs to the aldehyde dehydrogenase family. AstD subfamily.

It carries out the reaction N-succinyl-L-glutamate 5-semialdehyde + NAD(+) + H2O = N-succinyl-L-glutamate + NADH + 2 H(+). The protein operates within amino-acid degradation; L-arginine degradation via AST pathway; L-glutamate and succinate from L-arginine: step 4/5. Its function is as follows. Catalyzes the NAD-dependent reduction of succinylglutamate semialdehyde into succinylglutamate. This chain is N-succinylglutamate 5-semialdehyde dehydrogenase, found in Vibrio campbellii (strain ATCC BAA-1116).